A 131-amino-acid polypeptide reads, in one-letter code: Large ribosomal subunit protein bL12 (131 aa).

The protein belongs to the bacterial ribosomal protein bL12 family. Homodimer. Part of the ribosomal stalk of the 50S ribosomal subunit. Forms a multimeric L10(L12)X complex, where L10 forms an elongated spine to which 2 to 4 L12 dimers bind in a sequential fashion. Binds GTP-bound translation factors.

Functionally, forms part of the ribosomal stalk which helps the ribosome interact with GTP-bound translation factors. Is thus essential for accurate translation. The sequence is that of Large ribosomal subunit protein bL12 from Prochlorococcus marinus subsp. pastoris (strain CCMP1986 / NIES-2087 / MED4).